Consider the following 388-residue polypeptide: Succinate--CoA ligase [ADP-forming] subunit beta (388 aa).

An ATP-grasp domain is found at 9 to 244 (KQLFARYGLP…QSQEDPRAAQ (236 aa)). Residues lysine 46, 53–55 (GRG), glutamate 99, threonine 102, and glutamate 107 each bind ATP. Mg(2+) contacts are provided by asparagine 199 and aspartate 213. Substrate contacts are provided by residues asparagine 264 and 321–323 (GIV).

Belongs to the succinate/malate CoA ligase beta subunit family. As to quaternary structure, heterotetramer of two alpha and two beta subunits. Requires Mg(2+) as cofactor.

The enzyme catalyses succinate + ATP + CoA = succinyl-CoA + ADP + phosphate. It carries out the reaction GTP + succinate + CoA = succinyl-CoA + GDP + phosphate. Its pathway is carbohydrate metabolism; tricarboxylic acid cycle; succinate from succinyl-CoA (ligase route): step 1/1. Functionally, succinyl-CoA synthetase functions in the citric acid cycle (TCA), coupling the hydrolysis of succinyl-CoA to the synthesis of either ATP or GTP and thus represents the only step of substrate-level phosphorylation in the TCA. The beta subunit provides nucleotide specificity of the enzyme and binds the substrate succinate, while the binding sites for coenzyme A and phosphate are found in the alpha subunit. This chain is Succinate--CoA ligase [ADP-forming] subunit beta, found in Shigella flexneri serotype 5b (strain 8401).